A 212-amino-acid chain; its full sequence is MDPLFQQTHKQVHEIQSCMGRLETADKQSVHIVENEIQASIDQIFSRLERLEILSSKEPPNKRQNARLRVDQLKYDVQHLQTALRNFQHRRHAREQQERQREELLSRTFTTNDSDTTIPMDESLQFNSSLQKVHNGMDDLILDGHNILDGLRTQRLTLKGTQKKILDIANMLGLSNTVMRLIEKRAFQDKYFMIGGMLLTCVVMFLVVQYLT.

Residue methionine 1 is modified to N-acetylmethionine. Residues 1-190 are Cytoplasmic-facing; the sequence is MDPLFQQTHK…LIEKRAFQDK (190 aa). The stretch at 61 to 107 forms a coiled coil; the sequence is NKRQNARLRVDQLKYDVQHLQTALRNFQHRRHAREQQERQREELLSR. Residues 118–120 carry the IxM motif; signal for cargo packaging into COPII-coated vesicles motif; the sequence is IPM. A helical; Anchor for type IV membrane protein transmembrane segment spans residues 191 to 211; the sequence is YFMIGGMLLTCVVMFLVVQYL. Position 212 (threonine 212) is a topological domain, vesicular.

Belongs to the GOSR2 family. As to quaternary structure, part of a unique SNARE complex composed of the Golgi SNAREs GOSR1, STX5 and YKT6. Interacts (via IxM motif) with SEC24C and SEC24D; mediates GOSR2 packaging into COPII-coated vesicles. Interacts with BET1.

The protein localises to the golgi apparatus. It localises to the cis-Golgi network membrane. Its subcellular location is the golgi apparatus membrane. The protein resides in the endoplasmic reticulum membrane. In terms of biological role, involved in transport of proteins from the cis/medial-Golgi to the trans-Golgi network. The sequence is that of Golgi SNAP receptor complex member 2 (GOSR2) from Homo sapiens (Human).